The chain runs to 616 residues: Sodium- and chloride-dependent transporter XTRP3 (616 aa).

Positions 1–11 (MRLAIKRRASR) are enriched in basic residues. A disordered region spans residues 1–26 (MRLAIKRRASRGQRPGPDEKRARDME). Residues 1-37 (MRLAIKRRASRGQRPGPDEKRARDMEKARPQWGNPLQ) are Cytoplasmic-facing. The segment covering 16 to 26 (GPDEKRARDME) has biased composition (basic and acidic residues). Residues 38–58 (FVFACISYAVGLGNVWRFPYL) traverse the membrane as a helical segment. The Extracellular segment spans residues 59–66 (CQMYGGGS). Residues 67–87 (FLVPYLIMLIVEGMPLLYLEL) form a helical membrane-spanning segment. Residues 88-103 (AVGQRMRQGSIGAWRT) lie on the Cytoplasmic side of the membrane. Residues 104–124 (ISPYLSGVGVASVVVSFFLSM) form a helical membrane-spanning segment. Topologically, residues 125 to 189 (YYNVINAWGF…ISPSIQENGG (65 aa)) are extracellular. Residue asparagine 155 is glycosylated (N-linked (GlcNAc...) asparagine). The helical transmembrane segment at 190–210 (VQWEPALCLTLAWLMVYLCIL) threads the bilayer. Residues 211–218 (RGTESTGK) are Cytoplasmic-facing. Residues 219–239 (VVYFTALMPYCVLIIYLVRGL) traverse the membrane as a helical segment. At 240 to 265 (TLHGATNGLMYMFTPKIEQLANPKAW) the chain is on the extracellular side. The helical transmembrane segment at 266–286 (INAATQIFFSLGLGFGSLIAF) threads the bilayer. Over 287–300 (ASYNEPSNDCQKHA) the chain is Cytoplasmic. A helical membrane pass occupies residues 301–321 (VIVSVINSSTSIFASIVTFSI). Over 322–413 (YGFKATFNYE…EAIKNMEVSQ (92 aa)) the chain is Extracellular. The N-linked (GlcNAc...) asparagine glycan is linked to asparagine 381. The helical transmembrane segment at 414-434 (LWSVLYFFMLLMLGMGSMLGN) threads the bilayer. Residues 435 to 455 (TAAILTPLTDSKVISSYLPKE) are Cytoplasmic-facing. The helical transmembrane segment at 456 to 476 (AISGLVCLINCAVGMVFTMEA) threads the bilayer. At 477–489 (GNYWFDIFNDYAA) the chain is on the extracellular side. The helical transmembrane segment at 490-510 (TLSLLLIVLVETIAVCYVYGL) threads the bilayer. Over 511 to 533 (RRFESDLRAMTGRPLNWYWKAMW) the chain is Cytoplasmic. The helical transmembrane segment at 534 to 554 (AFVSPLLIIGLFIFYLSDYIL) threads the bilayer. Residues 555 to 578 (TGTLQYQAWDATQGQLVTKDYPPH) lie on the Extracellular side of the membrane. A helical transmembrane segment spans residues 579-599 (ALAVIGLLVASSTMCIPLVAL). Residues 600-616 (GTFIRNRLKRGGSSPVA) lie on the Cytoplasmic side of the membrane.

This sequence belongs to the sodium:neurotransmitter symporter (SNF) (TC 2.A.22) family. SLC6A20 subfamily. In terms of tissue distribution, highly expressed in epithelial cells of duodenum, jejunum, ileum, stomach, cecum, colon and kidney proximal tubule. Also expressed in the choroid plexus, microglia and meniges of the brain and in the ovary.

The protein resides in the apical cell membrane. The catalysed reaction is L-proline(out) + chloride(out) + 2 Na(+)(out) = L-proline(in) + chloride(in) + 2 Na(+)(in). The enzyme catalyses 4-hydroxy-L-proline(out) + chloride(out) + 2 Na(+)(out) = 4-hydroxy-L-proline(in) + chloride(in) + 2 Na(+)(in). It carries out the reaction 2-methyl-2-(methylamino)propanoate(out) + chloride(out) + 2 Na(+)(out) = 2-methyl-2-(methylamino)propanoate(in) + chloride(in) + 2 Na(+)(in). It catalyses the reaction L-pipecolate(out) + chloride(out) + 2 Na(+)(out) = L-pipecolate(in) + chloride(in) + 2 Na(+)(in). The catalysed reaction is glycine betaine(out) + chloride(out) + 2 Na(+)(out) = glycine betaine(in) + chloride(in) + 2 Na(+)(in). The enzyme catalyses glycine(out) + chloride(out) + 2 Na(+)(out) = glycine(in) + chloride(in) + 2 Na(+)(in). Functionally, mediates the Na(+)- and Cl(-)-dependent uptake of imino acids such as L-proline, N-methyl-L-proline and pipecolate as well as N-methylated amino acids. Also transports glycine, regulates proline and glycine homeostasis in the brain playing a role in the modulation of NMDAR currents. This is Sodium- and chloride-dependent transporter XTRP3 from Rattus norvegicus (Rat).